Reading from the N-terminus, the 549-residue chain is Probable protein kinase UbiB (549 aa).

One can recognise a Protein kinase domain in the interval 123–501 (DFNDTPLASA…QQKSHKSNYL (379 aa)). Residues 129–137 (LASASISQV) and lysine 152 each bind ATP. The active-site Proton acceptor is aspartate 287. A run of 2 helical transmembrane segments spans residues 498–518 (SNYL…LFTQ) and 519–539 (IVTL…WAIG).

It belongs to the ABC1 family. UbiB subfamily.

Its subcellular location is the cell inner membrane. It participates in cofactor biosynthesis; ubiquinone biosynthesis [regulation]. Functionally, is probably a protein kinase regulator of UbiI activity which is involved in aerobic coenzyme Q (ubiquinone) biosynthesis. This is Probable protein kinase UbiB from Shewanella frigidimarina (strain NCIMB 400).